The chain runs to 1146 residues: Cell division cycle and apoptosis regulator protein 1 (1146 aa).

Residues 1–246 (MAQFGGQKNP…AQPQPQSLLQ (246 aa)) are interaction with AR. An interaction with GATA2 region spans residues 200 to 657 (QRIQTLPNQN…RALSSKGLKS (458 aa)). A disordered region spans residues 282-351 (IVSQPQPARR…RRERERSPRR (70 aa)). Composition is skewed to basic and acidic residues over residues 290–331 (RRLD…ERSP) and 338–349 (ERSPRRERERSP). Phosphoserine is present on Ser453. Residues 591 to 615 (KQQLVEKLQGERKKADGEQDEEEKD) are a coiled coil. Residues 599-635 (QGERKKADGEQDEEEKDDGEVKEIATPTHWSKLDPKA) are disordered. The span at 608-618 (EQDEEEKDDGE) shows a compositional bias: acidic residues. Thr624 carries the phosphothreonine modification. The SAP domain maps to 633–667 (PKAMKVNDLRKELESRALSSKGLKSQLIARLTKQL). Lys634 participates in a covalent cross-link: Glycyl lysine isopeptide (Lys-Gly) (interchain with G-Cter in ubiquitin). The segment at 640 to 1146 (DLRKELESRA…EKSKENGSGV (507 aa)) is interaction with GATA1. Phosphothreonine is present on Thr664. Composition is skewed to basic and acidic residues over residues 671–684 (EQKE…KSEK), 691–716 (DKKS…RQER), 793–814 (KEDK…KKEE), and 829–852 (SGDD…KDDS). 2 disordered regions span residues 671 to 716 (EQKE…RQER) and 793 to 912 (KEDK…KEKP). A phosphoserine mark is found at Ser682 and Ser694. Positions 853–884 (KDDDETEEDNNQDEYDPMEAEEAEDEDDDREE) are enriched in acidic residues. Position 858 is a phosphothreonine (Thr858). Basic and acidic residues predominate over residues 885–912 (EEVKRDDKRDVSRYCKDRPAKDKEKEKP). A Glycyl lysine isopeptide (Lys-Gly) (interchain with G-Cter in SUMO1); alternate cross-link involves residue Lys1008. A Glycyl lysine isopeptide (Lys-Gly) (interchain with G-Cter in SUMO2); alternate cross-link involves residue Lys1008. Residues 1029-1110 (DVGSLLQKLE…LQFENQLNKT (82 aa)) adopt a coiled-coil conformation. Residues Lys1063 and Lys1131 each participate in a glycyl lysine isopeptide (Lys-Gly) (interchain with G-Cter in SUMO2) cross-link.

Directly interacts with ESR1, NR3C1 and p53/TP53. Interacts (via N-terminus) with CALCOCO1. Interacts with MED1 and GATA1. Interacts with AR and GATA2.

It localises to the cytoplasm. It is found in the perinuclear region. Its function is as follows. Associates with components of the Mediator and p160 coactivator complexes that play a role as intermediaries transducing regulatory signals from upstream transcriptional activator proteins to basal transcription machinery at the core promoter. Recruited to endogenous nuclear receptor target genes in response to the appropriate hormone. Also functions as a p53 coactivator. May thus play an important role in transcriptional regulation. May be involved in apoptosis signaling in the presence of the retinoid CD437. Apoptosis induction involves sequestration of 14-3-3 protein(s) and mediated altered expression of multiple cell cycle regulatory genes including MYC, CCNB1 and CDKN1A. Plays a role in cell cycle progression and/or cell proliferation. In association with CALCOCO1 enhances GATA1- and MED1-mediated transcriptional activation from the gamma-globin promoter during erythroid differentiation of K562 erythroleukemia cells. Can act as a both a coactivator and corepressor of AR-mediated transcription. Contributes to chromatin looping and AR transcription complex assembly by stabilizing AR-GATA2 association on chromatin and facilitating MED1 and RNA polymerase II recruitment to AR-binding sites. May play an important role in the growth and tumorigenesis of prostate cancer cells. The polypeptide is Cell division cycle and apoptosis regulator protein 1 (Ccar1) (Mus musculus (Mouse)).